The following is a 258-amino-acid chain: Imidazole glycerol phosphate synthase subunit HisF (258 aa).

Active-site residues include aspartate 11 and aspartate 130.

It belongs to the HisA/HisF family. In terms of assembly, heterodimer of HisH and HisF.

It localises to the cytoplasm. It catalyses the reaction 5-[(5-phospho-1-deoxy-D-ribulos-1-ylimino)methylamino]-1-(5-phospho-beta-D-ribosyl)imidazole-4-carboxamide + L-glutamine = D-erythro-1-(imidazol-4-yl)glycerol 3-phosphate + 5-amino-1-(5-phospho-beta-D-ribosyl)imidazole-4-carboxamide + L-glutamate + H(+). Its pathway is amino-acid biosynthesis; L-histidine biosynthesis; L-histidine from 5-phospho-alpha-D-ribose 1-diphosphate: step 5/9. IGPS catalyzes the conversion of PRFAR and glutamine to IGP, AICAR and glutamate. The HisF subunit catalyzes the cyclization activity that produces IGP and AICAR from PRFAR using the ammonia provided by the HisH subunit. The polypeptide is Imidazole glycerol phosphate synthase subunit HisF (Stenotrophomonas maltophilia (strain R551-3)).